The primary structure comprises 8384 residues: Mucin-19 (8384 aa).

Residues 1–21 form the signal peptide; the sequence is MKLILWYLVVALWCFFKDVEA. Disordered stretches follow at residues 33 to 197, 222 to 247, 279 to 305, and 332 to 467; these read AASR…YGAG, SKAD…PDAG, GDTG…IDLG, and QEGF…PEAT. 2 stretches are compositionally biased toward low complexity: residues 35–48 and 88–98; these read SRSG…SSSG and GGFFNSSSSSG. The segment covering 169–184 has biased composition (basic and acidic residues); sequence DKSRERWDAGNSRSED. The span at 187-197 shows a compositional bias: polar residues; that stretch reads ADSTNTRYGAG. Residues 279-299 are compositionally biased toward polar residues; sequence GDTGISSKTVEGNQTSSSGGS. Residues 359 to 369 are compositionally biased toward low complexity; the sequence is GSDSSSSGDSS. The span at 370 to 381 shows a compositional bias: polar residues; sequence ARNGFENSSGIS. 2 stretches are compositionally biased toward low complexity: residues 424 to 435 and 443 to 452; these read SDSGGNTWSSDS and TSSSEYSTSG. 3 consecutive VWFD domains span residues 478–649, 815–995, and 1274–1447; these read GEIS…QHCN, GRCK…SSCI, and TICH…QECS. Disulfide bonds link Cys-502–Cys-648, Cys-817–Cys-952, Cys-838–Cys-994, Cys-857–Cys-865, Cys-1276–Cys-1411, Cys-1298–Cys-1446, Cys-1307–Cys-1408, and Cys-1323–Cys-1330. Disordered regions lie at residues 1680 to 1699, 1732 to 2464, 2484 to 2526, 2540 to 2827, 2850 to 2917, 2984 to 3027, 3075 to 3368, 3386 to 3428, 3585 to 3628, 3667 to 3736, 4105 to 4147, 4187 to 4251, 4315 to 4390, 4414 to 4455, 4510 to 4583, 4790 to 4843, 4895 to 4930, 5130 to 5161, 5429 to 5452, 5464 to 5494, 5880 to 5918, 6069 to 6403, 6440 to 6918, 6953 to 7223, 7250 to 7749, 7783 to 7975, and 8020 to 8133; these read TSSS…PFTT, AGTT…KSPG, LESE…TEGS, RPLD…MTGT, STVG…LGTI, VTTG…SGTT, GTTG…GKTG, TTRL…GKTG, ETTG…TNGL, GSSA…TGLP, TGSS…NGLS, SAGV…AEVT, GLSA…SARV, TGSS…TNGQ, TGTT…TGLP, SSAG…AGVT, TGTT…GVTG, VTGT…VTGK, GPSA…GTTG, GTSI…SAEM, TGKT…STES, GRAT…ETTK, GTSE…TGFK, SFST…SKTG, KNGS…EAGS, and SGRS…VSQP. 3 stretches are compositionally biased toward low complexity: residues 1732–1746, 1772–1813, and 1820–1833; these read AGTT…TGAA, PGEA…TTGP, and GATS…EGMS. Polar residues predominate over residues 1835 to 1860; sequence VTGQSLGSTAGSDSEITAKTSFTGSS. Residues 1868-1879 are compositionally biased toward low complexity; sequence PSPGSPGHFSGG. Residues 1880 to 1905 show a composition bias toward polar residues; sequence TTEWGNVATTGAAGENTSGALGSTEG. Over residues 1909–1921 the composition is skewed to low complexity; the sequence is ATTSAGSGNTAGT. Polar residues predominate over residues 1950–1968; sequence GSSTPGEADIGNTSFGKSG. 2 stretches are compositionally biased toward low complexity: residues 1969–1983 and 2013–2049; these read TPTV…SPVS and GGKI…SGPS. Over residues 2055-2100 the composition is skewed to polar residues; it reads NYGQSSEIPGTIKSSSDVSGTMGQSDTTSGPSVAVTRTSEQSSGVT. 2 stretches are compositionally biased toward low complexity: residues 2132 to 2147 and 2159 to 2170; these read TTGS…GPSS and GSGTSGQSVTGS. Polar residues-rich tracts occupy residues 2171–2186 and 2209–2225; these read RATG…TVSF and GSGT…TTRL. Low complexity-rich tracts occupy residues 2233–2246 and 2280–2313; these read TESS…TTPS and SGPS…TKPS. The interval 2238-6086 is approximate repeats of G-V-T-G-T-T-G-P-S-A; the sequence is GVTGTTTPSA…GVTGTTGLSA (3849 aa). Composition is skewed to polar residues over residues 2316 to 2332 and 2354 to 2372; these read RTGT…TTEP and ATES…TTIP. Residues 2403–2419 are compositionally biased toward gly residues; it reads SSGGSGATRSSGGGMGT. The segment covering 2420-2441 has biased composition (low complexity); it reads TGQSTARSETTGPLFGLTGTFG. The segment covering 2442–2460 has biased composition (polar residues); that stretch reads QSATVTGTSSNSAGVTTPE. Low complexity-rich tracts occupy residues 2512–2526, 2545–2571, and 2578–2589; these read SAGE…TEGS, GSGT…TTRK, and TTGLSGLTGTSG. Polar residues-rich tracts occupy residues 2595-2610 and 2638-2653; these read TGTS…TSEK and TRPS…QSAR. The segment covering 2654 to 2681 has biased composition (low complexity); it reads VTETVGASAGVTGTTGPSTEGSGATGPS. Polar residues-rich tracts occupy residues 2695 to 2748 and 2755 to 2770; these read SGTT…TGTT and TETT…TTGP. A compositionally biased stretch (low complexity) spans 2787 to 2799; sequence ATRSSGGETETTG. 3 stretches are compositionally biased toward polar residues: residues 2800–2827, 2850–2859, and 2874–2892; these read QSAV…MTGT, STVGLETTRP, and AQTT…QSAR. Residues 2894-2910 show a composition bias toward low complexity; it reads TGASGPSVGVTGTTGPA. Over residues 2984-2998 the composition is skewed to polar residues; it reads VTTGPSVTGVETTAK. Positions 2999–3027 are enriched in low complexity; it reads TTSGGLSTTISSVGGTGTTGQSPERSGTT. Positions 3099–3109 are enriched in polar residues; it reads PSITGSGTTRP. The span at 3114-3130 shows a compositional bias: low complexity; sequence SWTAGTSSGGHSTTSPS. Over residues 3131–3159 the composition is skewed to polar residues; sequence VRGTETTGQSAAESVTTGPVTGYTETSGP. The segment covering 3172-3188 has biased composition (low complexity); sequence TVTQTTGSSAAVSGTTV. A compositionally biased stretch (polar residues) spans 3189 to 3224; it reads QSLTVSGTTRPSSGQTEITGSSVKESGTTESSAVRS. Positions 3225–3277 are enriched in low complexity; it reads GTTGPTAGVTGTNGPSSAGVTGITGSSPGVTGTTGSSPGVTGTTGSSARSGTS. 2 stretches are compositionally biased toward polar residues: residues 3303 to 3317 and 3324 to 3362; these read ITGT…TGTT and TGTT…SSAG. Positions 3390–3417 are enriched in low complexity; sequence SAGVTGTTGPSPGVTGTTGTPAGVTGTT. 2 stretches are compositionally biased toward polar residues: residues 3702 to 3728 and 4105 to 4116; these read VTGT…TTGP and TGSSARSGTSIP. Over residues 4117–4126 the composition is skewed to low complexity; the sequence is SVGETGTTRT. A compositionally biased stretch (polar residues) spans 4320-4346; that stretch reads VTGTTRPSAGVTGTTGQSAEVTGTTEP. Composition is skewed to low complexity over residues 4347–4385 and 4414–4426; these read SAGL…GTTG and TGSS…STPS. Low complexity-rich tracts occupy residues 5469-5494 and 5889-5903; these read VTGT…GTTG and TGTT…TTTG. Composition is skewed to polar residues over residues 5908–5918, 6071–6103, and 6111–6121; these read ITGTNGLSAEM, KTRS…TTKT, and TRPSAGITATT. The span at 6156 to 6168 shows a compositional bias: low complexity; that stretch reads TTTGTTGVTTGTT. Polar residues-rich tracts occupy residues 6217–6248 and 6257–6275; these read EVST…TATT and APGS…SAST. Over residues 6284 to 6295 the composition is skewed to low complexity; it reads TGSTRGVRTTGS. Composition is skewed to polar residues over residues 6303-6323 and 6336-6346; these read GEFS…TTLT and ESTTSLPQSAK. Residues 6378-6389 show a composition bias toward low complexity; that stretch reads SGTTISSGGSHT. Polar residues-rich tracts occupy residues 6440–6457 and 6470–6503; these read GRAT…TSQA and TTIT…TTYI. Positions 6507 to 6523 are enriched in low complexity; that stretch reads GTTRGGLATATTGAFSG. The span at 6560-6571 shows a compositional bias: polar residues; it reads TTFTSGGSHTEA. Residues 6581–6597 are compositionally biased toward low complexity; it reads TGTESRAATTRAAPGTT. Residues 6599–6608 are compositionally biased toward polar residues; the sequence is VPGSSNTGAT. A compositionally biased stretch (low complexity) spans 6612–6628; that stretch reads GGSATTRGRITTATTGA. 2 stretches are compositionally biased toward polar residues: residues 6669–6680 and 6689–6698; these read RITSGGSYTATT and APGSSNTGAT. Residues 6707 to 6718 show a composition bias toward low complexity; it reads TRGRITTATTGA. The span at 6752-6766 shows a compositional bias: polar residues; sequence TTLTGDRSSTGSESR. The span at 6767–6781 shows a compositional bias: low complexity; that stretch reads TATTGVAPGTTVAPG. The span at 6794–6817 shows a compositional bias: polar residues; sequence SGTTNIGRATGATTSIVGSDTSQA. Residues 6827 to 6842 are compositionally biased toward low complexity; it reads SPGASSTSQSSRPGTS. Over residues 6843–6875 the composition is skewed to polar residues; the sequence is VTPDSSASESETVTTKEFSGTTAISRTSHTGTP. The span at 6887 to 6901 shows a compositional bias: low complexity; that stretch reads TATTGVAPGTTVAPG. 2 stretches are compositionally biased toward polar residues: residues 6902–6911 and 6953–6964; these read SSNTEATTSV and GTSEVAPSTTVA. A compositionally biased stretch (low complexity) spans 6966–6994; sequence GSFSTAATTSPGASGTTGVTTTTKTTTSL. The span at 7006-7041 shows a compositional bias: polar residues; it reads SATTGAPGSRTGTAGVPSATTVSPGSSNSEATTSVG. The segment covering 7045-7074 has biased composition (low complexity); it reads KTGAETITEATTSTEGTGTSGTGFKTGTSE. Residues 7085–7094 show a composition bias toward polar residues; sequence SFSTAATTSP. Residues 7095-7112 are compositionally biased toward low complexity; it reads GASGMTGVTTTTKTTTSL. A compositionally biased stretch (polar residues) spans 7143–7158; the sequence is TRVTPGSSNSEATTSV. 2 stretches are compositionally biased toward low complexity: residues 7201-7215 and 7250-7276; these read SGSS…TEGT and SFST…TTSL. Positions 7293–7311 are enriched in polar residues; it reads SGTTVAPGSSNSEATTSVG. The span at 7379–7397 shows a compositional bias: low complexity; it reads TTSTKGTGTSGTGFKTGTS. Positions 7403–7421 are enriched in polar residues; that stretch reads TTVSPGSFSTATISPGASR. Low complexity predominate over residues 7422-7435; the sequence is TTGAAPAAETTTSL. The segment covering 7465–7483 has biased composition (polar residues); that stretch reads SATTIAPGSSNSEATTSLG. Residues 7525–7537 show a composition bias toward gly residues; that stretch reads PLGGASGTSGGYV. Polar residues-rich tracts occupy residues 7544 to 7557 and 7571 to 7596; these read PTTS…SRTI and AGTS…TSPG. A compositionally biased stretch (low complexity) spans 7600-7613; that stretch reads MTGVRTTSKTTTSL. Composition is skewed to polar residues over residues 7642 to 7669 and 7698 to 7708; these read SSRT…SGTG and SFSTAATTSPG. Positions 7715-7732 are enriched in low complexity; the sequence is TGPTAETTTFLGGSSTTG. Residues 7783–7811 are compositionally biased toward polar residues; it reads KNGSMTTALGSQLSSSQTVIPGSSGTISH. The segment covering 7812 to 7828 has biased composition (low complexity); sequence TTVAPGSSVTGTTTGAS. Polar residues predominate over residues 7830-7851; the sequence is DQVTGSKTGTTGVALSTTVAPG. Residues 7852–7861 show a composition bias toward low complexity; that stretch reads SSSTEATTST. A compositionally biased stretch (polar residues) spans 7862–7891; it reads GVHRTTVVGQKTGATTRGSAKQGTRSTIEA. Residues 7892–7917 show a composition bias toward low complexity; the sequence is TTSFRGTGTTGSGMNTGTTGVVSGNT. The segment covering 7918–7934 has biased composition (polar residues); sequence ISPSSFNTEATSGTSER. Positions 7938-7952 are enriched in low complexity; sequence GSEIGTTGIVSGTTV. Polar residues-rich tracts occupy residues 7953–7965, 8020–8040, 8048–8081, and 8110–8120; these read APGS…TTSL, SGRS…SGTT, TGNT…SISG, and ETGVQTGSTLV. A VWFC domain is found at 8159 to 8225; sequence PVCHGPLGEE…DTCCEIGYCE (67 aa). 4 disulfide bridges follow: Cys-8288/Cys-8339, Cys-8306/Cys-8353, Cys-8315/Cys-8369, and Cys-8319/Cys-8371. One can recognise a CTCK domain in the interval 8288–8376; the sequence is CKNNCRSSLV…TTCSCLDICQ (89 aa).

As to expression, expressed corneal epithelial cells, conjunctival goblet and epithelial cells and lacrimal gland cells (at protein level). Expressed by mucous cells of the submandibular gland and submucosal gland of the trachea. Expressed by middle ear epithelial cells.

It is found in the secreted. Functionally, may function in ocular mucus homeostasis. The polypeptide is Mucin-19 (MUC19) (Homo sapiens (Human)).